Reading from the N-terminus, the 197-residue chain is Ribosome maturation factor RimP (197 aa).

Belongs to the RimP family.

It is found in the cytoplasm. In terms of biological role, required for maturation of 30S ribosomal subunits. In Acidovorax ebreus (strain TPSY) (Diaphorobacter sp. (strain TPSY)), this protein is Ribosome maturation factor RimP.